A 91-amino-acid polypeptide reads, in one-letter code: Uteroglobin (91 aa).

An N-terminal signal peptide occupies residues 1–21; the sequence is MKLTITLALVTLALLCSPASA.

It belongs to the secretoglobin family. Antiparallel homodimer; disulfide-linked. Interaction with LMBR1L is controversial.

Its subcellular location is the secreted. Uteroglobin binds progesterone specifically and with high affinity. It may regulate progesterone concentrations reaching the blastocyst. It is also a potent inhibitor of phospholipase A2. The sequence is that of Uteroglobin (SCGB1A1) from Lepus capensis (Brown hare).